A 523-amino-acid polypeptide reads, in one-letter code: Chitinase Chi52 (523 aa).

Residues 1–30 (MNQAVRFRPVITFALAFLLLITWFAPRADA) form the signal peptide. The segment at 80-101 (GSGGETPTPDTAPPSVPAGLTS) is disordered. In terms of domain architecture, Fibronectin type-III spans 95–180 (VPAGLTSSSI…TSLSVTTSNG (86 aa)). A GH18 domain is found at 190–513 (KWLIGYWHNF…SAHRPFLNGL (324 aa)). Catalysis depends on glutamate 302, which acts as the Proton donor.

This sequence belongs to the glycosyl hydrolase 18 family. Chitinase class II subfamily.

It carries out the reaction Random endo-hydrolysis of N-acetyl-beta-D-glucosaminide (1-&gt;4)-beta-linkages in chitin and chitodextrins.. Activity is inhibited by Cu(2+) and Co(2+), and almost completely inhibited by SDS. Its function is as follows. Acidic chitinase that displays a broad substrate specificity, showing the highest specific activity toward colloidal chitin, followed by ethylene glycol chitin and ball milled chitin, but exhibits no activity toward powdery chitin and chitosan. Hydrolyzes colloidal chitin and chitooligosaccharides with degree of polymerization 2-5 to release mainly N-acetyl chitobiose. Displays inhibition effects on the growth of some phytopathogenic fungi, including Alternaria alstroemeriae, Botrytis cinerea, Rhizoctonia solani, Sclerotinia sclerotiorum and Valsa mali. This is Chitinase Chi52 from Paenibacillus xylanexedens.